Here is a 198-residue protein sequence, read N- to C-terminus: Cell division protein SepF (198 aa).

The interval 170-198 is disordered; that stretch reads EVPQPPARPARPASTNPPAWGNETNRMAQ. The span at 179 to 188 shows a compositional bias: low complexity; it reads ARPASTNPPA.

It belongs to the SepF family. Homodimer. Interacts with FtsZ.

Its subcellular location is the cytoplasm. Its function is as follows. Cell division protein that is part of the divisome complex and is recruited early to the Z-ring. Probably stimulates Z-ring formation, perhaps through the cross-linking of FtsZ protofilaments. Its function overlaps with FtsA. This Trichormus variabilis (strain ATCC 29413 / PCC 7937) (Anabaena variabilis) protein is Cell division protein SepF.